Consider the following 261-residue polypeptide: Complex I assembly factor TIMMDC1, mitochondrial (261 aa).

3 helical membrane passes run 67 to 87 (LNSVYQAGFLGFLIGAIYGGV), 131 to 151 (WGWRVGLFTTSYFGIITCMSV), and 183 to 203 (AGGIIGGFLGGVAGVTSLLLM).

The protein belongs to the Tim17/Tim22/Tim23 family. In terms of assembly, associates with complex I assembly intermediates during its biogenesis in a NdufAF3 and NdufAF4 dependent manner.

The protein resides in the membrane. Functionally, chaperone protein involved in the assembly of the mitochondrial NADH:ubiquinone oxidoreductase complex (complex I). Essential for viability. The chain is Complex I assembly factor TIMMDC1, mitochondrial from Drosophila melanogaster (Fruit fly).